A 220-amino-acid polypeptide reads, in one-letter code: Deoxyribose-phosphate aldolase (220 aa).

D89 acts as the Proton donor/acceptor in catalysis. K151 acts as the Schiff-base intermediate with acetaldehyde in catalysis. The active-site Proton donor/acceptor is the K180.

Belongs to the DeoC/FbaB aldolase family. DeoC type 1 subfamily.

Its subcellular location is the cytoplasm. It catalyses the reaction 2-deoxy-D-ribose 5-phosphate = D-glyceraldehyde 3-phosphate + acetaldehyde. It participates in carbohydrate degradation; 2-deoxy-D-ribose 1-phosphate degradation; D-glyceraldehyde 3-phosphate and acetaldehyde from 2-deoxy-alpha-D-ribose 1-phosphate: step 2/2. Its function is as follows. Catalyzes a reversible aldol reaction between acetaldehyde and D-glyceraldehyde 3-phosphate to generate 2-deoxy-D-ribose 5-phosphate. This Thermus thermophilus (strain ATCC BAA-163 / DSM 7039 / HB27) protein is Deoxyribose-phosphate aldolase.